We begin with the raw amino-acid sequence, 453 residues long: CBL-interacting protein kinase 24 (453 aa).

Residues 18-271 enclose the Protein kinase domain; the sequence is YEVGRTIGQG…IEQIREDTWF (254 aa). Residues 24–32 and Lys-47 contribute to the ATP site; that span reads IGQGTFAKV. The active-site Proton acceptor is the Asp-141. Residues 159 to 186 are activation loop; sequence DFGLSTLAQKGVGLLHTTCGTPNYVAPE. An NAF domain is found at 310-336; that stretch reads NDGGPLVMNAFEMITLSQGLDLSALFD. Positions 343 to 372 are PPI; sequence KRQTRFVSRKPAKTIVATIEVVAETMGLKV.

The protein belongs to the protein kinase superfamily. CAMK Ser/Thr protein kinase family. SNF1 subfamily. In terms of assembly, interacts with CBL4. The cofactor is Mn(2+).

It carries out the reaction L-seryl-[protein] + ATP = O-phospho-L-seryl-[protein] + ADP + H(+). The enzyme catalyses L-threonyl-[protein] + ATP = O-phospho-L-threonyl-[protein] + ADP + H(+). Functionally, involved in the regulatory pathway for the control of intracellular Na(+) and K(+) homeostasis and salt tolerance. Operates in synergy with CBL4 to activate the plasma membrane Na(+)/H(+) antiporter SOS1. CIPK serine-threonine protein kinases interact with CBL proteins. Binding of a CBL protein to the regulatory NAF domain of CIPK protein lead to the activation of the kinase in a calcium-dependent manner. The sequence is that of CBL-interacting protein kinase 24 (CIPK24) from Oryza sativa subsp. japonica (Rice).